The chain runs to 415 residues: Serine hydroxymethyltransferase (415 aa).

(6S)-5,6,7,8-tetrahydrofolate is bound by residues Leu-117 and Gly-121–Leu-123. Lys-226 carries the N6-(pyridoxal phosphate)lysine modification. Glu-241 contacts (6S)-5,6,7,8-tetrahydrofolate.

Belongs to the SHMT family. In terms of assembly, homodimer. The cofactor is pyridoxal 5'-phosphate.

It localises to the cytoplasm. The enzyme catalyses (6R)-5,10-methylene-5,6,7,8-tetrahydrofolate + glycine + H2O = (6S)-5,6,7,8-tetrahydrofolate + L-serine. Its pathway is one-carbon metabolism; tetrahydrofolate interconversion. The protein operates within amino-acid biosynthesis; glycine biosynthesis; glycine from L-serine: step 1/1. Functionally, catalyzes the reversible interconversion of serine and glycine with tetrahydrofolate (THF) serving as the one-carbon carrier. This reaction serves as the major source of one-carbon groups required for the biosynthesis of purines, thymidylate, methionine, and other important biomolecules. Also exhibits THF-independent aldolase activity toward beta-hydroxyamino acids, producing glycine and aldehydes, via a retro-aldol mechanism. This Bacillus licheniformis (strain ATCC 14580 / DSM 13 / JCM 2505 / CCUG 7422 / NBRC 12200 / NCIMB 9375 / NCTC 10341 / NRRL NRS-1264 / Gibson 46) protein is Serine hydroxymethyltransferase.